Reading from the N-terminus, the 238-residue chain is Tetrahydromethanopterin S-methyltransferase subunit A 1 (238 aa).

Residues 2–218 (VEKKSPAEGW…RMFAGMYSGK (217 aa)) are Cytoplasmic-facing. His84 contributes to the 5-hydroxybenzimidazolylcob(I)amide binding site. Residues 219–237 (VQGIMIGLAFTLTLGILLL) traverse the membrane as a helical segment. A topological domain (extracellular) is located at residue Val238.

The protein belongs to the MtrA family. As to quaternary structure, the complex is composed of 8 subunits; MtrA, MtrB, MtrC, MtrD, MtrE, MtrF, MtrG and MtrH. Requires 5-hydroxybenzimidazolylcob(I)amide as cofactor.

Its subcellular location is the cell membrane. The enzyme catalyses 5-methyl-5,6,7,8-tetrahydromethanopterin + coenzyme M + 2 Na(+)(in) = 5,6,7,8-tetrahydromethanopterin + methyl-coenzyme M + 2 Na(+)(out). Its pathway is one-carbon metabolism; methanogenesis from CO(2); methyl-coenzyme M from 5,10-methylene-5,6,7,8-tetrahydromethanopterin: step 2/2. Its function is as follows. Part of a complex that catalyzes the formation of methyl-coenzyme M and tetrahydromethanopterin from coenzyme M and methyl-tetrahydromethanopterin. This is an energy-conserving, sodium-ion translocating step. The chain is Tetrahydromethanopterin S-methyltransferase subunit A 1 from Methanothermobacter thermautotrophicus (strain ATCC 29096 / DSM 1053 / JCM 10044 / NBRC 100330 / Delta H) (Methanobacterium thermoautotrophicum).